A 113-amino-acid chain; its full sequence is Putative pterin-4-alpha-carbinolamine dehydratase (113 aa).

Belongs to the pterin-4-alpha-carbinolamine dehydratase family.

The enzyme catalyses (4aS,6R)-4a-hydroxy-L-erythro-5,6,7,8-tetrahydrobiopterin = (6R)-L-erythro-6,7-dihydrobiopterin + H2O. This is Putative pterin-4-alpha-carbinolamine dehydratase from Nitrosomonas europaea (strain ATCC 19718 / CIP 103999 / KCTC 2705 / NBRC 14298).